The following is a 201-amino-acid chain: Large ribosomal subunit protein uL4 (201 aa).

Positions 44–71 (RAQKTRAEVSGSGKKPWRQKGTGRARSG) are disordered.

It belongs to the universal ribosomal protein uL4 family. As to quaternary structure, part of the 50S ribosomal subunit.

Its function is as follows. One of the primary rRNA binding proteins, this protein initially binds near the 5'-end of the 23S rRNA. It is important during the early stages of 50S assembly. It makes multiple contacts with different domains of the 23S rRNA in the assembled 50S subunit and ribosome. Functionally, forms part of the polypeptide exit tunnel. This chain is Large ribosomal subunit protein uL4, found in Actinobacillus succinogenes (strain ATCC 55618 / DSM 22257 / CCUG 43843 / 130Z).